A 284-amino-acid polypeptide reads, in one-letter code: Polyamine aminopropyltransferase (284 aa).

Residues 2–237 (ELWYTEEQTQ…GYWLFGFASK (236 aa)) enclose the PABS domain. Glutamine 31 provides a ligand contact to S-methyl-5'-thioadenosine. Spermidine is bound by residues histidine 62 and aspartate 86. S-methyl-5'-thioadenosine contacts are provided by residues glutamate 106 and 137–138 (DG). Aspartate 155 acts as the Proton acceptor in catalysis. Spermidine is bound at residue 155 to 158 (DSTD). Proline 162 provides a ligand contact to S-methyl-5'-thioadenosine.

It belongs to the spermidine/spermine synthase family. Homodimer or homotetramer.

It localises to the cytoplasm. The catalysed reaction is S-adenosyl 3-(methylsulfanyl)propylamine + putrescine = S-methyl-5'-thioadenosine + spermidine + H(+). Its pathway is amine and polyamine biosynthesis; spermidine biosynthesis; spermidine from putrescine: step 1/1. Functionally, catalyzes the irreversible transfer of a propylamine group from the amino donor S-adenosylmethioninamine (decarboxy-AdoMet) to putrescine (1,4-diaminobutane) to yield spermidine. This chain is Polyamine aminopropyltransferase, found in Alkaliphilus metalliredigens (strain QYMF).